Here is a 23-residue protein sequence, read N- to C-terminus: Protein DCL, chloroplastic (23 aa).

The protein localises to the plastid. It is found in the chloroplast. Has a function in the early stage of chloroplast development and palisade cell morphogenesis. The chain is Protein DCL, chloroplastic from Pseudotsuga menziesii (Douglas-fir).